The primary structure comprises 126 residues: Small ribosomal subunit protein bS6 (126 aa).

This sequence belongs to the bacterial ribosomal protein bS6 family.

Binds together with bS18 to 16S ribosomal RNA. This Bordetella bronchiseptica (strain ATCC BAA-588 / NCTC 13252 / RB50) (Alcaligenes bronchisepticus) protein is Small ribosomal subunit protein bS6.